A 316-amino-acid chain; its full sequence is tRNA dimethylallyltransferase (316 aa).

27 to 34 (GATATGKT) lines the ATP pocket. 29 to 34 (TATGKT) contributes to the substrate binding site. The interaction with substrate tRNA stretch occupies residues 52-55 (DSRQ).

It belongs to the IPP transferase family. In terms of assembly, monomer. It depends on Mg(2+) as a cofactor.

The catalysed reaction is adenosine(37) in tRNA + dimethylallyl diphosphate = N(6)-dimethylallyladenosine(37) in tRNA + diphosphate. Functionally, catalyzes the transfer of a dimethylallyl group onto the adenine at position 37 in tRNAs that read codons beginning with uridine, leading to the formation of N6-(dimethylallyl)adenosine (i(6)A). The sequence is that of tRNA dimethylallyltransferase from Treponema pallidum (strain Nichols).